The sequence spans 263 residues: UPF0246 protein Mmar10_0828 (263 aa).

This sequence belongs to the UPF0246 family.

In Maricaulis maris (strain MCS10) (Caulobacter maris), this protein is UPF0246 protein Mmar10_0828.